Reading from the N-terminus, the 107-residue chain is Early E3A 12.5 kDa protein (107 aa).

The protein belongs to the adenoviridae E3A-2 family.

Not yet known. The protein is Early E3A 12.5 kDa protein of Human adenovirus C serotype 5 (HAdV-5).